A 544-amino-acid chain; its full sequence is Protein angel homolog 2 (544 aa).

The protein belongs to the CCR4/nocturin family.

This Bos taurus (Bovine) protein is Protein angel homolog 2 (ANGEL2).